Reading from the N-terminus, the 342-residue chain is Phenylalanine--tRNA ligase alpha subunit (342 aa).

Residue E260 participates in Mg(2+) binding.

The protein belongs to the class-II aminoacyl-tRNA synthetase family. Phe-tRNA synthetase alpha subunit type 1 subfamily. Tetramer of two alpha and two beta subunits. Mg(2+) is required as a cofactor.

It is found in the cytoplasm. The catalysed reaction is tRNA(Phe) + L-phenylalanine + ATP = L-phenylalanyl-tRNA(Phe) + AMP + diphosphate + H(+). This chain is Phenylalanine--tRNA ligase alpha subunit, found in Mycobacterium avium (strain 104).